The chain runs to 527 residues: Sensory neuron membrane protein 1 (527 aa).

Over 1 to 10 the chain is Cytoplasmic; the sequence is MQLQKPLKIG. The helical transmembrane segment at 11-31 threads the bilayer; sequence LGMMGAGLFGIIFGWVLFPVI. The Extracellular segment spans residues 32–456; the sequence is LKSQLKKEMA…LKNQLFIPKR (425 aa). 2 N-linked (GlcNAc...) asparagine glycosylation sites follow: Asn67 and Asn229. Disulfide bonds link Cys268-Cys333, Cys297-Cys352, and Cys335-Cys341. An N-linked (GlcNAc...) asparagine glycan is attached at Asn440. Residues 457-477 traverse the membrane as a helical segment; sequence IVSVVKWLLAGVGFVGLVGSL. At 478 to 527 the chain is on the cytoplasmic side; that stretch reads VYQFKGKMINFALSPSSAQVTKVNPEINQQNQPKDISIIGESQNPPKVDM.

Belongs to the CD36 family. As to expression, detected in both male and female antennal tissues. Expression is two to three fold higher in male compared to female antenna.

The protein localises to the cell membrane. Its function is as follows. Plays an olfactory role that is not restricted to pheromone sensitivity. The chain is Sensory neuron membrane protein 1 from Ostrinia furnacalis (Asian corn borer).